Here is a 77-residue protein sequence, read N- to C-terminus: Small integral membrane protein 5 (77 aa).

Residues 32 to 52 traverse the membrane as a helical segment; that stretch reads IVAFSVIILFTATVLLLLLIA.

It is found in the membrane. This is Small integral membrane protein 5 (SMIM5) from Homo sapiens (Human).